Consider the following 86-residue polypeptide: Protein Tat (86 aa).

Residues 1 to 24 (MDPVDPNQEPWNHPGSQPRTACNN) are interaction with human CREBBP. A transactivation region spans residues 1-48 (MDPVDPNQEPWNHPGSQPRTACNNCYCKKCCYHCQLCFLKKGLGIYYG). Positions 22, 25, and 27 each coordinate Zn(2+). The cysteine-rich stretch occupies residues 22 to 37 (CNNCYCKKCCYHCQLC). An N6-acetyllysine; by host PCAF modification is found at Lys28. Residues Cys30, His33, Cys34, and Cys37 each coordinate Zn(2+). The tract at residues 38–48 (FLKKGLGIYYG) is core. Residues 48–58 (GRKKRRQRRGT) are compositionally biased toward basic residues. A disordered region spans residues 48–86 (GRKKRRQRRGTPKSLQDHQTLIPKQPLSRTSGDPTGPEK). The Nuclear localization signal, RNA-binding (TAR), and protein transduction motif lies at 49–57 (RKKRRQRRG). The tract at residues 49–86 (RKKRRQRRGTPKSLQDHQTLIPKQPLSRTSGDPTGPEK) is interaction with the host capping enzyme RNGTT. 2 positions are modified to N6-acetyllysine; by host EP300 and GCN5L2: Lys50 and Lys51. An asymmetric dimethylarginine; by host PRMT6 mark is found at Arg52 and Arg53. Lys71 is covalently cross-linked (Glycyl lysine isopeptide (Lys-Gly) (interchain with G-Cter in ubiquitin)).

This sequence belongs to the lentiviruses Tat family. In terms of assembly, interacts with host CCNT1. Associates with the P-TEFb complex composed at least of Tat, P-TEFb (CDK9 and CCNT1), TAR RNA, RNA Pol II. Recruits the HATs CREBBP, TAF1/TFIID, EP300, PCAF and GCN5L2. Interacts with host KAT5/Tip60; this interaction targets the latter to degradation. Interacts with the host deacetylase SIRT1. Interacts with host capping enzyme RNGTT; this interaction stimulates RNGTT. Binds to host KDR, and to the host integrins ITGAV/ITGB3 and ITGA5/ITGB1. Interacts with host KPNB1/importin beta-1 without previous binding to KPNA1/importin alpha-1. Interacts with EIF2AK2. Interacts with host nucleosome assembly protein NAP1L1; this interaction may be required for the transport of Tat within the nucleus, since the two proteins interact at the nuclear rim. Interacts with host C1QBP/SF2P32; this interaction involves lysine-acetylated Tat. Interacts with the host chemokine receptors CCR2, CCR3 and CXCR4. Interacts with host DPP4/CD26; this interaction may trigger an anti-proliferative effect. Interacts with host LDLR. Interacts with the host extracellular matrix metalloproteinase MMP1. Interacts with host PRMT6; this interaction mediates Tat's methylation. Interacts with, and is ubiquitinated by MDM2/Hdm2. Interacts with host PSMC3 and HTATIP2. Interacts with STAB1; this interaction may overcome SATB1-mediated repression of IL2 and IL2RA (interleukin) in T cells by binding to the same domain than HDAC1. Interacts (when acetylated) with human CDK13, thereby increasing HIV-1 mRNA splicing and promoting the production of the doubly spliced HIV-1 protein Nef. Interacts with host TBP; this interaction modulates the activity of transcriptional pre-initiation complex. Interacts with host RELA. Interacts with host PLSCR1; this interaction negatively regulates Tat transactivation activity by altering its subcellular distribution. Asymmetrical arginine methylation by host PRMT6 seems to diminish the transactivation capacity of Tat and affects the interaction with host CCNT1. Post-translationally, acetylation by EP300, CREBBP, GCN5L2/GCN5 and PCAF regulates the transactivation activity of Tat. EP300-mediated acetylation of Lys-50 promotes dissociation of Tat from the TAR RNA through the competitive binding to PCAF's bromodomain. In addition, the non-acetylated Tat's N-terminus can also interact with PCAF. PCAF-mediated acetylation of Lys-28 enhances Tat's binding to CCNT1. Lys-50 is deacetylated by SIRT1. In terms of processing, polyubiquitination by host MDM2 does not target Tat to degradation, but activates its transactivation function and fosters interaction with CCNT1 and TAR RNA. Phosphorylated by EIF2AK2 on serine and threonine residues adjacent to the basic region important for TAR RNA binding and function. Phosphorylation of Tat by EIF2AK2 is dependent on the prior activation of EIF2AK2 by dsRNA.

It localises to the host nucleus. The protein resides in the host nucleolus. It is found in the host cytoplasm. The protein localises to the secreted. Transcriptional activator that increases RNA Pol II processivity, thereby increasing the level of full-length viral transcripts. Recognizes a hairpin structure at the 5'-LTR of the nascent viral mRNAs referred to as the transactivation responsive RNA element (TAR) and recruits the cyclin T1-CDK9 complex (P-TEFb complex) that will in turn hyperphosphorylate the RNA polymerase II to allow efficient elongation. The CDK9 component of P-TEFb and other Tat-activated kinases hyperphosphorylate the C-terminus of RNA Pol II that becomes stabilized and much more processive. Other factors such as HTATSF1/Tat-SF1, SUPT5H/SPT5, and HTATIP2 are also important for Tat's function. Besides its effect on RNA Pol II processivity, Tat induces chromatin remodeling of proviral genes by recruiting the histone acetyltransferases (HATs) CREBBP, EP300 and PCAF to the chromatin. This also contributes to the increase in proviral transcription rate, especially when the provirus integrates in transcriptionally silent region of the host genome. To ensure maximal activation of the LTR, Tat mediates nuclear translocation of NF-kappa-B by interacting with host RELA. Through its interaction with host TBP, Tat may also modulate transcription initiation. Tat can reactivate a latently infected cell by penetrating in it and transactivating its LTR promoter. In the cytoplasm, Tat is thought to act as a translational activator of HIV-1 mRNAs. In terms of biological role, extracellular circulating Tat can be endocytosed by surrounding uninfected cells via the binding to several surface receptors such as CD26, CXCR4, heparan sulfate proteoglycans (HSPG) or LDLR. Neurons are rarely infected, but they internalize Tat via their LDLR. Through its interaction with nuclear HATs, Tat is potentially able to control the acetylation-dependent cellular gene expression. Modulates the expression of many cellular genes involved in cell survival, proliferation or in coding for cytokines or cytokine receptors. Tat plays a role in T-cell and neurons apoptosis. Tat induced neurotoxicity and apoptosis probably contribute to neuroAIDS. Circulating Tat also acts as a chemokine-like and/or growth factor-like molecule that binds to specific receptors on the surface of the cells, affecting many cellular pathways. In the vascular system, Tat binds to ITGAV/ITGB3 and ITGA5/ITGB1 integrins dimers at the surface of endothelial cells and competes with bFGF for heparin-binding sites, leading to an excess of soluble bFGF. This is Protein Tat from Human immunodeficiency virus type 1 group M subtype H (isolate VI991) (HIV-1).